A 213-amino-acid polypeptide reads, in one-letter code: GTP cyclohydrolase 1 (213 aa).

Zn(2+)-binding residues include C104, H107, and C175.

This sequence belongs to the GTP cyclohydrolase I family. Homomer.

The catalysed reaction is GTP + H2O = 7,8-dihydroneopterin 3'-triphosphate + formate + H(+). It functions in the pathway cofactor biosynthesis; 7,8-dihydroneopterin triphosphate biosynthesis; 7,8-dihydroneopterin triphosphate from GTP: step 1/1. This Brucella suis (strain ATCC 23445 / NCTC 10510) protein is GTP cyclohydrolase 1.